Here is a 174-residue protein sequence, read N- to C-terminus: Adenine phosphoribosyltransferase (174 aa).

It belongs to the purine/pyrimidine phosphoribosyltransferase family. In terms of assembly, homodimer.

The protein resides in the cytoplasm. The catalysed reaction is AMP + diphosphate = 5-phospho-alpha-D-ribose 1-diphosphate + adenine. Its pathway is purine metabolism; AMP biosynthesis via salvage pathway; AMP from adenine: step 1/1. Functionally, catalyzes a salvage reaction resulting in the formation of AMP, that is energically less costly than de novo synthesis. The sequence is that of Adenine phosphoribosyltransferase from Nitrosomonas europaea (strain ATCC 19718 / CIP 103999 / KCTC 2705 / NBRC 14298).